A 431-amino-acid polypeptide reads, in one-letter code: uncharacterized protein (431 aa).

This is an uncharacterized protein from Caenorhabditis elegans.